The primary structure comprises 328 residues: Cytochrome f (328 aa).

Residues Met-1–Ala-44 form the signal peptide. Tyr-45, Cys-66, Cys-69, and His-70 together coordinate heme. Residues Ile-294 to Lys-314 form a helical membrane-spanning segment.

Belongs to the cytochrome f family. As to quaternary structure, the 4 large subunits of the cytochrome b6-f complex are cytochrome b6, subunit IV (17 kDa polypeptide, PetD), cytochrome f and the Rieske protein, while the 4 small subunits are PetG, PetL, PetM and PetN. The complex functions as a dimer. Requires heme as cofactor.

The protein localises to the cellular thylakoid membrane. Component of the cytochrome b6-f complex, which mediates electron transfer between photosystem II (PSII) and photosystem I (PSI), cyclic electron flow around PSI, and state transitions. The polypeptide is Cytochrome f (Rippkaea orientalis (strain PCC 8801 / RF-1) (Cyanothece sp. (strain PCC 8801))).